We begin with the raw amino-acid sequence, 277 residues long: Sulfate transport system permease protein CysT (277 aa).

Transmembrane regions (helical) follow at residues 17–37 (LGTS…ALVM), 64–84 (LLSA…MAWI), 99–119 (LMDL…ASLF), 136–156 (VTYT…PFVV), 185–205 (FCKV…ALSF), 215–235 (VIFI…MIFV), and 243–263 (PAAS…LFSI). In terms of domain architecture, ABC transmembrane type-1 spans 60–263 (YKVTLLSAFV…AASLLLLFSI (204 aa)).

It belongs to the binding-protein-dependent transport system permease family. CysTW subfamily. In terms of assembly, the complex is composed of two ATP-binding proteins (CysA), two transmembrane proteins (CysT and CysW) and a solute-binding protein (CysP).

It is found in the cell inner membrane. Its function is as follows. Part of the ABC transporter complex CysAWTP (TC 3.A.1.6.1) involved in sulfate/thiosulfate import. Probably responsible for the translocation of the substrate across the membrane. The chain is Sulfate transport system permease protein CysT (cysU) from Escherichia coli (strain K12).